Here is a 553-residue protein sequence, read N- to C-terminus: NAD(P)H-quinone oxidoreductase chain 4 2 (553 aa).

A run of 14 helical transmembrane segments spans residues 6–26 (FPWLSAIILLPLLASFLIPVI), 34–54 (VRWFALGVGLADFILMCYVFL), 87–107 (ISAPLVLLAGLVTTLSILAAW), 115–135 (LFYFLMLLLYAAQIGVFVAQD), 136–156 (LLLFFLMWEIELIPVYLLVSI), 169–189 (FLLYTAAASIFILVAGLAMAL), 210–230 (ALELVLYAGLLIAFGVKLAIF), 244–264 (SAPVSMILAGVLLKMGGYGLI), 276–296 (IYFAPILAILGVVNIIYGAFA), 312–332 (VSHMGFVLLGIASFTDVGISG), 333–353 (AMLQMLSHGLIAAVLFFLAGV), 376–396 (VFALFTAGAMASLALPGMSGF), 418–438 (VVTVFLASVGLILTPIYLLSM), and 487–507 (IFIAVSFLALIVAIGFYPQLA).

This sequence belongs to the complex I subunit 4 family.

It localises to the cellular thylakoid membrane. The catalysed reaction is a plastoquinone + NADH + (n+1) H(+)(in) = a plastoquinol + NAD(+) + n H(+)(out). It catalyses the reaction a plastoquinone + NADPH + (n+1) H(+)(in) = a plastoquinol + NADP(+) + n H(+)(out). Its function is as follows. NDH-1 shuttles electrons from NAD(P)H, via FMN and iron-sulfur (Fe-S) centers, to quinones in the respiratory chain. The immediate electron acceptor for the enzyme in this species is believed to be plastoquinone. Couples the redox reaction to proton translocation (for every two electrons transferred, four hydrogen ions are translocated across the cytoplasmic membrane), and thus conserves the redox energy in a proton gradient. The sequence is that of NAD(P)H-quinone oxidoreductase chain 4 2 from Microcystis aeruginosa (strain NIES-843 / IAM M-2473).